A 471-amino-acid chain; its full sequence is Ribulose bisphosphate carboxylase large chain (471 aa).

The residue at position 5 (lysine 5) is an N6,N6,N6-trimethyllysine. The substrate site is built by asparagine 114 and threonine 164. The active-site Proton acceptor is the lysine 166. Residue lysine 168 coordinates substrate. Residues lysine 192, aspartate 194, and glutamate 195 each contribute to the Mg(2+) site. At lysine 192 the chain carries N6-carboxylysine. The Proton acceptor role is filled by histidine 285. Arginine 286, histidine 318, and serine 370 together coordinate substrate.

It belongs to the RuBisCO large chain family. Type I subfamily. As to quaternary structure, heterohexadecamer of 8 large chains and 8 small chains; disulfide-linked. The disulfide link is formed within the large subunit homodimers. Mg(2+) is required as a cofactor. Post-translationally, the disulfide bond which can form in the large chain dimeric partners within the hexadecamer appears to be associated with oxidative stress and protein turnover.

The protein localises to the plastid. The protein resides in the chloroplast. The catalysed reaction is 2 (2R)-3-phosphoglycerate + 2 H(+) = D-ribulose 1,5-bisphosphate + CO2 + H2O. The enzyme catalyses D-ribulose 1,5-bisphosphate + O2 = 2-phosphoglycolate + (2R)-3-phosphoglycerate + 2 H(+). RuBisCO catalyzes two reactions: the carboxylation of D-ribulose 1,5-bisphosphate, the primary event in carbon dioxide fixation, as well as the oxidative fragmentation of the pentose substrate in the photorespiration process. Both reactions occur simultaneously and in competition at the same active site. The chain is Ribulose bisphosphate carboxylase large chain from Anthocleista grandiflora (Forest fever tree).